Here is a 72-residue protein sequence, read N- to C-terminus: Translation initiation factor IF-1 (72 aa).

One can recognise an S1-like domain in the interval 1-72 (MSKEEVLEFS…TKGRIIYRYK (72 aa)).

It belongs to the IF-1 family. Component of the 30S ribosomal translation pre-initiation complex which assembles on the 30S ribosome in the order IF-2 and IF-3, IF-1 and N-formylmethionyl-tRNA(fMet); mRNA recruitment can occur at any time during PIC assembly.

Its subcellular location is the cytoplasm. Functionally, one of the essential components for the initiation of protein synthesis. Stabilizes the binding of IF-2 and IF-3 on the 30S subunit to which N-formylmethionyl-tRNA(fMet) subsequently binds. Helps modulate mRNA selection, yielding the 30S pre-initiation complex (PIC). Upon addition of the 50S ribosomal subunit IF-1, IF-2 and IF-3 are released leaving the mature 70S translation initiation complex. The protein is Translation initiation factor IF-1 of Bartonella henselae (strain ATCC 49882 / DSM 28221 / CCUG 30454 / Houston 1) (Rochalimaea henselae).